Consider the following 513-residue polypeptide: Na(+)/H(+) antiporter NhaB (513 aa).

Transmembrane regions (helical) follow at residues 23–43 (LALI…PFVA), 52–72 (IFTL…LLAI), 97–117 (LLLM…LFIF), 120–140 (LLLS…AAAF), 144–164 (FLDA…FYGI), 202–222 (LMMH…VGEP), 238–258 (FFLR…LTCL), 303–323 (AIIG…VGLI), 348–368 (TESL…AVII), 391–411 (LFYI…VGTI), 447–467 (ATPN…APLI), and 475–495 (VWMA…CVEF).

It belongs to the NhaB Na(+)/H(+) (TC 2.A.34) antiporter family.

The protein resides in the cell inner membrane. It carries out the reaction 2 Na(+)(in) + 3 H(+)(out) = 2 Na(+)(out) + 3 H(+)(in). Na(+)/H(+) antiporter that extrudes sodium in exchange for external protons. The sequence is that of Na(+)/H(+) antiporter NhaB from Escherichia coli O127:H6 (strain E2348/69 / EPEC).